The following is a 41-amino-acid chain: Photosystem I reaction center subunit IX (41 aa).

Residues 7-27 (YLSSAPILATIWFAITAGILI) form a helical membrane-spanning segment.

This sequence belongs to the PsaJ family.

The protein resides in the cellular thylakoid membrane. May help in the organization of the PsaE and PsaF subunits. The chain is Photosystem I reaction center subunit IX from Synechococcus sp. (strain ATCC 27144 / PCC 6301 / SAUG 1402/1) (Anacystis nidulans).